Consider the following 44-residue polypeptide: Protein PsbN (44 aa).

Residues 6 to 26 (FFFTIFLWFFLLSITAYSIYV) traverse the membrane as a helical segment.

Belongs to the PsbN family.

The protein localises to the plastid. It is found in the chloroplast thylakoid membrane. In terms of biological role, may play a role in photosystem I and II biogenesis. This is Protein PsbN from Stigeoclonium helveticum (Green alga).